We begin with the raw amino-acid sequence, 746 residues long: NAD(P)H-quinone oxidoreductase subunit 5, chloroplastic (746 aa).

The next 16 membrane-spanning stretches (helical) occupy residues 9–29 (YIILFLPLPVTMSIGFGLLFV), 40–60 (WAFVSVLLLSMVMGFSVNLAI), 88–108 (LIDPLTSIMSLLISTVGIMVL), 125–145 (FAYMSFFNTSMLGLVTSSNLI), 147–167 (IHIFWELVGMCSYLLIGFWFT), 185–205 (GDFGLLLGILGFYWITGSLEF), 225–245 (FAILCACLLFLGAVAKSAQFP), 258–278 (TPISALIHAATMVAAGIFLVA), 283–303 (LFIVIPYIMNLISLIGIITLL), 327–347 (LGYIMLALGIGSYRAALFHLI), 354–374 (ALLFLGSGSIIHSMEPVVGYS), 396–416 (TTFLLGTLSLCGIPPLACFWS), 425–445 (WLYSPIFAIIAYFTAGLTAFY), 554–574 (LFPLLVLVLFTLVVGLIGIPF), 610–630 (IFSVSVSLFGLFIASIFYGSV), and 726–746 (YLFLYLSYVSIFLIFYQYFDF).

It belongs to the complex I subunit 5 family. As to quaternary structure, NDH is composed of at least 16 different subunits, 5 of which are encoded in the nucleus.

The protein localises to the plastid. It localises to the chloroplast thylakoid membrane. It carries out the reaction a plastoquinone + NADH + (n+1) H(+)(in) = a plastoquinol + NAD(+) + n H(+)(out). It catalyses the reaction a plastoquinone + NADPH + (n+1) H(+)(in) = a plastoquinol + NADP(+) + n H(+)(out). In terms of biological role, NDH shuttles electrons from NAD(P)H:plastoquinone, via FMN and iron-sulfur (Fe-S) centers, to quinones in the photosynthetic chain and possibly in a chloroplast respiratory chain. The immediate electron acceptor for the enzyme in this species is believed to be plastoquinone. Couples the redox reaction to proton translocation, and thus conserves the redox energy in a proton gradient. The protein is NAD(P)H-quinone oxidoreductase subunit 5, chloroplastic (ndhF) of Dioscorea elephantipes (Elephant's foot yam).